The following is a 464-amino-acid chain: Fumarate hydratase class II (464 aa).

Residues 98-100 (SGT), 129-132 (HPND), 139-141 (SSN), and Thr187 each bind substrate. His188 (proton donor/acceptor) is an active-site residue. Residue Ser318 is part of the active site. Residues Ser319 and 324–326 (KVN) each bind substrate.

This sequence belongs to the class-II fumarase/aspartase family. Fumarase subfamily. As to quaternary structure, homotetramer.

It is found in the cytoplasm. The catalysed reaction is (S)-malate = fumarate + H2O. It participates in carbohydrate metabolism; tricarboxylic acid cycle; (S)-malate from fumarate: step 1/1. In terms of biological role, involved in the TCA cycle. Catalyzes the stereospecific interconversion of fumarate to L-malate. The polypeptide is Fumarate hydratase class II (Pasteurella multocida (strain Pm70)).